The following is a 388-amino-acid chain: D-alanyl-D-alanine carboxypeptidase DacD (388 aa).

Residues 1–21 (MKRRLIIAASLFVFNLSSGFA) form the signal peptide. S63 functions as the Acyl-ester intermediate in the catalytic mechanism. The active-site Proton acceptor is the K66. S129 is an active-site residue. K232 contributes to the substrate binding site.

Belongs to the peptidase S11 family.

It is found in the cell inner membrane. The catalysed reaction is Preferential cleavage: (Ac)2-L-Lys-D-Ala-|-D-Ala. Also transpeptidation of peptidyl-alanyl moieties that are N-acyl substituents of D-alanine.. It participates in cell wall biogenesis; peptidoglycan biosynthesis. In terms of biological role, removes C-terminal D-alanyl residues from sugar-peptide cell wall precursors. The protein is D-alanyl-D-alanine carboxypeptidase DacD (dacD) of Escherichia coli (strain K12).